Here is a 224-residue protein sequence, read N- to C-terminus: uncharacterized protein (224 aa).

A run of 6 helical transmembrane segments spans residues 25 to 45, 54 to 74, 91 to 111, 119 to 139, 142 to 162, and 174 to 194; these read MMLALAIITSLISEFISIPFF, ISVVFLVACAFFVSLGWSLTI, IGVLTVTLANLSTILFTRLYF, FCWIFVFLFTTLSNALLLTTL, ILITPLFWYYFGYVQTPNFLI, and HFFFFGINNYWLGIFCLYSFF.

Its subcellular location is the cell membrane. This is an uncharacterized protein from Mycoplasma genitalium (strain ATCC 33530 / DSM 19775 / NCTC 10195 / G37) (Mycoplasmoides genitalium).